We begin with the raw amino-acid sequence, 280 residues long: Mastin (280 aa).

The first 15 residues, 1–15 (MLWLLVLTAPWLGGS), serve as a signal peptide directing secretion. Positions 16–30 (VPISPDPGLRHEQVG) are excised as a propeptide. The Peptidase S1 domain occupies 31 to 275 (IVGGCKVPAR…YVSWIHQHIP (245 aa)). Residues Cys62 and Cys78 are joined by a disulfide bond. Residue His77 is the Charge relay system of the active site. Residues Asn106 and Asn117 are each glycosylated (N-linked (GlcNAc...) asparagine). Asp127 (charge relay system) is an active-site residue. 3 disulfides stabilise this stretch: Cys161-Cys234, Cys194-Cys215, and Cys224-Cys252. Ser228 (charge relay system) is an active-site residue.

It belongs to the peptidase S1 family. In terms of assembly, oligomer; disulfide-linked. Post-translationally, N-glycosylated. As to expression, mononuclear cells within skin, intestine, trachea and lung parenchyma, and polymorphonuclear leukocytes within capillaries and blood.

It localises to the cytoplasm. Its activity is regulated as follows. Inhibited by leupeptin and bis(5-amidino-2-benzimidazolyl)methane (BABIM). In terms of biological role, trypsin-like serine protease. Has a preference for extended substrates with basic residues at the P1 position; Arg is preferred over Lys. Active towards calcitonin gene-related peptide and gelatin. Not active towards substance P, vasoactive intestinal peptide, type I collagen or azocasein. This is Mastin from Canis lupus familiaris (Dog).